Here is a 529-residue protein sequence, read N- to C-terminus: MLLIIVVLVGTLIYFLSFHNKKRHGLPPGPKPLPIIGNIKDMPPKGVAAFRHWLKHKDTYGPVSSVSVLGQPLILIHDREAAHYLFDKSSGKSSGRPSANFGGRLCGFDQILSLQQYGDTFKRHRKLVHRQMGTRAGAAKFRQIQDVESHRFLLRSLDNPGNLMEHIRKEAGGVILKATYGYSIEPHKPDPLVHLVEFMVEGISIVVVPMKFVVDFLPWLEYIPECLPGMSFKARARRWRTILNNTIEAPYQFVRQQMAKGIQFESYVSSLLTQEKLKGGNDTLDETYEADIKRTAAIMYAGGADTTVSTIQSFVLAMMVYPEVLKKAQAEIDNVIGPDRLPGFEDRENLPYINSMVKESLRWMPAVPMGAAHKADDDIYYGDLCIPKGSFLLPNVWWFLHNPETYQDPERYDPDRYLEPRNEPDPDSNCWGYGRRICPGRLLADESIFIVIARVVAAFDIEKDVDEQGNTIEPKVEFTTEGALSRPVDYPYRIKPRNAKCVDLIRAVEKEHPWDKGDASLLQQDMVVL.

Residues 2 to 19 (LLIIVVLVGTLIYFLSFH) traverse the membrane as a helical segment. Residues Asn244 and Asn281 are each glycosylated (N-linked (GlcNAc...) asparagine). Cys438 provides a ligand contact to heme.

Belongs to the cytochrome P450 family. Requires heme as cofactor.

It localises to the membrane. It catalyses the reaction (-)-longiborneol + reduced [NADPH--hemoprotein reductase] + O2 = culmorin + oxidized [NADPH--hemoprotein reductase] + H2O + H(+). The protein operates within mycotoxin biosynthesis. Its function is as follows. Cytochrome P450 monooxygenase involved in the biosynthesis of culmorin, a tricyclic sesquiterpene diol reported to have antifungal activity and some phytotoxicity to wheat coleoptile tissue, contributing to Fusarium head blight disease. The terpene cyclase CLM1 is responsible for the cyclization of farnesyl diphosphate into the intermediate longiborneol. Longiborneol is then hydroxylated in a regio- and endo-stereoselective manner at position C-11 by the cytochrome P450 monooxygenase CLM2 to produce culmorin. Additional non-specific oxygenases are also able to hydroxylate longiborneol at other sites than C-11 leading to 3-hydroxylongiborneol, 5-hydroxylongiborneol, 12-hydroxylongiborneol and 15-hydroxylongiborneol. Moreover, another oxygenase capable of installing a C-11 exo-hydroxy group in longiborneol can also yield 11-epi-acetylculmorin. The production of these longiborneol derivatives is dwarfed by the high abundance of culmorin, suggesting that CLM2 displays superior enzymatic activity to the unidentified, possibly promiscuous, additional oxygenases. This Gibberella zeae (strain ATCC MYA-4620 / CBS 123657 / FGSC 9075 / NRRL 31084 / PH-1) (Wheat head blight fungus) protein is Cytochrome P450 monooxygenase CLM2.